The sequence spans 267 residues: NAD kinase (267 aa).

The active-site Proton acceptor is aspartate 45. NAD(+) is bound by residues 45-46 (DG), 121-122 (NE), arginine 147, aspartate 149, 160-165 (TAYSKS), and alanine 184.

This sequence belongs to the NAD kinase family. Requires a divalent metal cation as cofactor.

It is found in the cytoplasm. The catalysed reaction is NAD(+) + ATP = ADP + NADP(+) + H(+). Its function is as follows. Involved in the regulation of the intracellular balance of NAD and NADP, and is a key enzyme in the biosynthesis of NADP. Catalyzes specifically the phosphorylation on 2'-hydroxyl of the adenosine moiety of NAD to yield NADP. In Lactobacillus acidophilus (strain ATCC 700396 / NCK56 / N2 / NCFM), this protein is NAD kinase.